Consider the following 82-residue polypeptide: RNA-binding protein Hfq (82 aa).

A Sm domain is found at 11 to 71 (DTFLNHVRKT…ISTIMPGAPI (61 aa)).

The protein belongs to the Hfq family. As to quaternary structure, homohexamer.

In terms of biological role, RNA chaperone that binds small regulatory RNA (sRNAs) and mRNAs to facilitate mRNA translational regulation in response to envelope stress, environmental stress and changes in metabolite concentrations. Also binds with high specificity to tRNAs. This is RNA-binding protein Hfq from Bradyrhizobium sp. (strain BTAi1 / ATCC BAA-1182).